Reading from the N-terminus, the 40-residue chain is Large ribosomal subunit protein bL33c (40 aa).

This sequence belongs to the bacterial ribosomal protein bL33 family.

The protein resides in the plastid. It is found in the chloroplast. The polypeptide is Large ribosomal subunit protein bL33c (rpl33) (Pisum sativum (Garden pea)).